Consider the following 251-residue polypeptide: MSKLNDLPASTLQFYTTASYPCSYLPEQLARSQVATPSHLIDTIVYGGLVQAGFRRSGAFTYRPFCDNCRACLPVRVVVDSLALRRSQRRSWNRHRHLVATQHDLYYHPDHYALYLRYQAQRHSGGGMDRDSREQYRHFLLPSNVDSKLVEFRENGVLRMVSIIDELPDGISSVYTFFDPDVPGASFGTYNILWQAHQCRELKLPYLYLGYWIKDSRKMAYKAAFRPLQALINGQWELLENLSDYPSCAFP.

The protein belongs to the R-transferase family. Bpt subfamily.

Its subcellular location is the cytoplasm. It catalyses the reaction N-terminal L-glutamyl-[protein] + L-leucyl-tRNA(Leu) = N-terminal L-leucyl-L-glutamyl-[protein] + tRNA(Leu) + H(+). The enzyme catalyses N-terminal L-aspartyl-[protein] + L-leucyl-tRNA(Leu) = N-terminal L-leucyl-L-aspartyl-[protein] + tRNA(Leu) + H(+). Functionally, functions in the N-end rule pathway of protein degradation where it conjugates Leu from its aminoacyl-tRNA to the N-termini of proteins containing an N-terminal aspartate or glutamate. This is Aspartate/glutamate leucyltransferase from Nitrosospira multiformis (strain ATCC 25196 / NCIMB 11849 / C 71).